A 163-amino-acid polypeptide reads, in one-letter code: Thiol peroxidase (163 aa).

Positions 16 to 162 (LQVGDKALDF…FEAAIAAAKA (147 aa)) constitute a Thioredoxin domain. Residue C58 is the Cysteine sulfenic acid (-SOH) intermediate of the active site. Residues C58 and C92 are joined by a disulfide bond.

It belongs to the peroxiredoxin family. Tpx subfamily. In terms of assembly, homodimer.

The enzyme catalyses a hydroperoxide + [thioredoxin]-dithiol = an alcohol + [thioredoxin]-disulfide + H2O. Functionally, thiol-specific peroxidase that catalyzes the reduction of hydrogen peroxide and organic hydroperoxides to water and alcohols, respectively. Plays a role in cell protection against oxidative stress by detoxifying peroxides. The chain is Thiol peroxidase from Streptococcus pneumoniae serotype 2 (strain D39 / NCTC 7466).